A 97-amino-acid chain; its full sequence is Small ribosomal subunit protein eS25 (97 aa).

The disordered stretch occupies residues 1-24 (MAPAASGAKKQKKKWSKGKVKDKA). Residues 9–18 (KKQKKKWSKG) show a composition bias toward basic residues.

The protein belongs to the eukaryotic ribosomal protein eS25 family. Component of the small ribosomal subunit (SSU). Mature N.crassa ribosomes consist of a small (40S) and a large (60S) subunit. The 40S small subunit contains 1 molecule of ribosomal RNA (18S rRNA) and at least 32 different proteins. The large 60S subunit contains 3 rRNA molecules (26S, 5.8S and 5S rRNA) and at least 42 different proteins.

It localises to the cytoplasm. Component of the ribosome, a large ribonucleoprotein complex responsible for the synthesis of proteins in the cell. The small ribosomal subunit (SSU) binds messenger RNAs (mRNAs) and translates the encoded message by selecting cognate aminoacyl-transfer RNA (tRNA) molecules. The large subunit (LSU) contains the ribosomal catalytic site termed the peptidyl transferase center (PTC), which catalyzes the formation of peptide bonds, thereby polymerizing the amino acids delivered by tRNAs into a polypeptide chain. The nascent polypeptides leave the ribosome through a tunnel in the LSU and interact with protein factors that function in enzymatic processing, targeting, and the membrane insertion of nascent chains at the exit of the ribosomal tunnel. This is Small ribosomal subunit protein eS25 (rps-25) from Neurospora crassa (strain ATCC 24698 / 74-OR23-1A / CBS 708.71 / DSM 1257 / FGSC 987).